The following is a 190-amino-acid chain: Orotate phosphoribosyltransferase (190 aa).

Residue 114–122 (EDVITTGGS) participates in 5-phospho-alpha-D-ribose 1-diphosphate binding. Positions 118 and 146 each coordinate orotate.

It belongs to the purine/pyrimidine phosphoribosyltransferase family. PyrE subfamily. Homodimer. Mg(2+) serves as cofactor.

It carries out the reaction orotidine 5'-phosphate + diphosphate = orotate + 5-phospho-alpha-D-ribose 1-diphosphate. The protein operates within pyrimidine metabolism; UMP biosynthesis via de novo pathway; UMP from orotate: step 1/2. Catalyzes the transfer of a ribosyl phosphate group from 5-phosphoribose 1-diphosphate to orotate, leading to the formation of orotidine monophosphate (OMP). This chain is Orotate phosphoribosyltransferase, found in Pelotomaculum thermopropionicum (strain DSM 13744 / JCM 10971 / SI).